The primary structure comprises 121 residues: NADH-quinone oxidoreductase subunit A 2 (121 aa).

3 helical membrane passes run 6–26 (FLPVLFMVTGIVLVAAATLFV), 60–80 (VPFFILAILLVVFDVEAMFLF), and 89–109 (IGFVGYIEMFVFMLLLLVGFA).

Belongs to the complex I subunit 3 family. NDH-1 is composed of 14 different subunits. Subunits NuoA, H, J, K, L, M, N constitute the membrane sector of the complex.

The protein localises to the cell inner membrane. The enzyme catalyses a quinone + NADH + 5 H(+)(in) = a quinol + NAD(+) + 4 H(+)(out). Functionally, NDH-1 shuttles electrons from NADH, via FMN and iron-sulfur (Fe-S) centers, to quinones in the respiratory chain. The immediate electron acceptor for the enzyme in this species is believed to be ubiquinone. Couples the redox reaction to proton translocation (for every two electrons transferred, four hydrogen ions are translocated across the cytoplasmic membrane), and thus conserves the redox energy in a proton gradient. The protein is NADH-quinone oxidoreductase subunit A 2 of Rhizobium meliloti (strain 1021) (Ensifer meliloti).